The primary structure comprises 570 residues: Conserved oligomeric Golgi complex subunit 8 (570 aa).

It belongs to the COG8 family. Component of the conserved oligomeric Golgi complex which is composed of eight different subunits and is required for normal Golgi morphology and localization.

The protein localises to the golgi apparatus membrane. In terms of biological role, required for normal Golgi function. In Drosophila melanogaster (Fruit fly), this protein is Conserved oligomeric Golgi complex subunit 8.